The sequence spans 453 residues: Anthocyanidin 3-O-glucosyltransferase (453 aa).

H17 (proton acceptor) is an active-site residue. H17 lines the an anthocyanidin pocket. The active-site Charge relay is the D117. T139 serves as a coordination point for UDP-alpha-D-glucose. An an anthocyanidin-binding site is contributed by H148. Residues A331, Q333, H348, W351, N352, S353, and E356 each coordinate UDP-alpha-D-glucose. G371 contributes to the an anthocyanidin binding site. The UDP-alpha-D-glucose site is built by D372 and Q373.

It belongs to the UDP-glycosyltransferase family.

The catalysed reaction is an anthocyanidin + UDP-alpha-D-glucose + H(+) = an anthocyanidin 3-O-beta-D-glucoside + UDP. It catalyses the reaction delphinidin + UDP-alpha-D-glucose = delphinidin 3-O-beta-D-glucoside + UDP. It carries out the reaction pelargonidin + UDP-alpha-D-glucose = pelargonidin 3-O-beta-D-glucoside + UDP. The enzyme catalyses cyanidin + UDP-alpha-D-glucose = cyanidin 3-O-beta-D-glucoside + UDP + H(+). It participates in pigment biosynthesis; anthocyanin biosynthesis. In the presence of other necessary color factors, this glycosylation reaction allows the accumulation of anthocyanin pigments. Anthocyanidins are the preferred substrates, while flavonols are only a minor substrate in vitro. This chain is Anthocyanidin 3-O-glucosyltransferase, found in Gentiana triflora (Clustered gentian).